The primary structure comprises 483 residues: Probable pectate lyase 12 (483 aa).

Residues methionine 1–serine 24 form the signal peptide. N-linked (GlcNAc...) asparagine glycosylation is found at asparagine 27 and asparagine 50. Ca(2+) contacts are provided by aspartate 220, aspartate 244, and aspartate 248. Arginine 300 is an active-site residue.

Belongs to the polysaccharide lyase 1 family. The cofactor is Ca(2+).

It carries out the reaction Eliminative cleavage of (1-&gt;4)-alpha-D-galacturonan to give oligosaccharides with 4-deoxy-alpha-D-galact-4-enuronosyl groups at their non-reducing ends.. It participates in glycan metabolism; pectin degradation; 2-dehydro-3-deoxy-D-gluconate from pectin: step 2/5. The protein is Probable pectate lyase 12 of Arabidopsis thaliana (Mouse-ear cress).